A 246-amino-acid polypeptide reads, in one-letter code: Complement C1q tumor necrosis factor-related protein 3 (246 aa).

The N-terminal stretch at 1–22 is a signal peptide; the sequence is MLWRQLIYWQLLALFFLPFCLC. A Collagen-like domain is found at 51 to 113; that stretch reads GYQGPPGPPG…KGEKGYPGIP (63 aa). The disordered stretch occupies residues 53 to 110; that stretch reads QGPPGPPGPPGIPGNHGNNGNNGATGHEGAKGEKGDKGDLGPRGERGQHGPKGEKGYP. A compositionally biased stretch (pro residues) spans 55–64; sequence PPGPPGPPGI. The span at 65–74 shows a compositional bias: low complexity; it reads PGNHGNNGNN. N-linked (GlcNAc...) asparagine glycosylation occurs at Asn-70. Residues 80 to 107 show a composition bias toward basic and acidic residues; the sequence is EGAKGEKGDKGDLGPRGERGQHGPKGEK. The C1q domain occupies 113–246; that stretch reads PPELQIAFMA…FAGFLLFETK (134 aa).

Post-translationally, glycosylated on Asn-70. In terms of tissue distribution, expressed in colon and small intestine.

It is found in the secreted. This is Complement C1q tumor necrosis factor-related protein 3 (C1QTNF3) from Homo sapiens (Human).